Here is a 625-residue protein sequence, read N- to C-terminus: MKSDHDIYLFREGTHAKLYNKLGCHLQSNGGANFAVWAPNAESVSVVGDWNYWSGNVDRLDLRDDGSGIWQGFVENAVRGQGYKYRIQSSHGSYGVDKADPFAFYAEPPPATASRVWSLEHDWKDDQWMSSRGPKNALDAPMSIYEIHLGSWRRQDGHFLDYRELAHSLADYVIEMGFTHVELMPVTEHPFYGSWGYQTTGYFAPTSRFGTPQDFMHFVDHLHQRGIGVLLDWVPSHFPTDEHGLGYFDGTHLFEHSDPRQGFHPEWNSSIFNYGRNEVRSFLISSGLFWLDKYHLDGLRVDGVASMLYLDYARKEDEWIPNRHGGRENLEAVDFLQTLNKAVYREYPDTLTIAEESTAWPRVSRPTDMDGLGFGMKWNMGWMHDSLAYMQQEPVHRKYHHHKLTFSLVYAFNENFVLPLSHDEVVHGKGSLLGKMPGDAWQQFANLRALFGYMWAHPGKKLLFMGGEFGQRREWTHDGELEWWVTKLEGHAGLQRYVAQLNRVYRSLPALYQLDFSPAGFEWVEADAADTSVFAFLRKPREHGAPVLIVSNMTPVPRTNYMLGVPLAGFWREVINSDASEFGGSGWGNLGGVEASPVRFHGRPHSVCLTLPPLSTLIFEHVPHA.

The active-site Nucleophile is Asp-302. The active-site Proton donor is Glu-355.

It belongs to the glycosyl hydrolase 13 family. GlgB subfamily. In terms of assembly, monomer.

The catalysed reaction is Transfers a segment of a (1-&gt;4)-alpha-D-glucan chain to a primary hydroxy group in a similar glucan chain.. It functions in the pathway glycan biosynthesis; glycogen biosynthesis. Functionally, catalyzes the formation of the alpha-1,6-glucosidic linkages in glycogen by scission of a 1,4-alpha-linked oligosaccharide from growing alpha-1,4-glucan chains and the subsequent attachment of the oligosaccharide to the alpha-1,6 position. The sequence is that of 1,4-alpha-glucan branching enzyme GlgB from Albidiferax ferrireducens (strain ATCC BAA-621 / DSM 15236 / T118) (Rhodoferax ferrireducens).